Here is a 130-residue protein sequence, read N- to C-terminus: Phosphoribosyl-AMP cyclohydrolase (130 aa).

Mg(2+) is bound at residue Asp-74. Residue Cys-75 coordinates Zn(2+). Residues Asp-76 and Asp-78 each coordinate Mg(2+). Cys-91 and Cys-98 together coordinate Zn(2+).

This sequence belongs to the PRA-CH family. In terms of assembly, homodimer. Requires Mg(2+) as cofactor. It depends on Zn(2+) as a cofactor.

Its subcellular location is the cytoplasm. The enzyme catalyses 1-(5-phospho-beta-D-ribosyl)-5'-AMP + H2O = 1-(5-phospho-beta-D-ribosyl)-5-[(5-phospho-beta-D-ribosylamino)methylideneamino]imidazole-4-carboxamide. It participates in amino-acid biosynthesis; L-histidine biosynthesis; L-histidine from 5-phospho-alpha-D-ribose 1-diphosphate: step 3/9. Functionally, catalyzes the hydrolysis of the adenine ring of phosphoribosyl-AMP. This is Phosphoribosyl-AMP cyclohydrolase from Bradyrhizobium sp. (strain ORS 278).